The chain runs to 514 residues: Proline--tRNA ligase (514 aa).

This sequence belongs to the class-II aminoacyl-tRNA synthetase family. ProS type 3 subfamily. In terms of assembly, homodimer.

It is found in the cytoplasm. It carries out the reaction tRNA(Pro) + L-proline + ATP = L-prolyl-tRNA(Pro) + AMP + diphosphate. In terms of biological role, catalyzes the attachment of proline to tRNA(Pro) in a two-step reaction: proline is first activated by ATP to form Pro-AMP and then transferred to the acceptor end of tRNA(Pro). The sequence is that of Proline--tRNA ligase from Erythrobacter litoralis (strain HTCC2594).